A 420-amino-acid chain; its full sequence is Adenylosuccinate synthetase (420 aa).

GTP-binding positions include 12–18 (GDEGKGK) and 40–42 (GHT). Asp-13 acts as the Proton acceptor in catalysis. Positions 13 and 40 each coordinate Mg(2+). Residues 13–16 (DEGK), 38–41 (NAGH), Thr-128, Arg-142, Gln-221, Thr-236, and Arg-299 each bind IMP. The active-site Proton donor is the His-41. 295–301 (ATTGRPR) contributes to the substrate binding site. GTP-binding positions include Arg-301, 327–329 (KAD), and 399–401 (SYG).

This sequence belongs to the adenylosuccinate synthetase family. As to quaternary structure, homodimer. Requires Mg(2+) as cofactor.

It is found in the cytoplasm. The catalysed reaction is IMP + L-aspartate + GTP = N(6)-(1,2-dicarboxyethyl)-AMP + GDP + phosphate + 2 H(+). It functions in the pathway purine metabolism; AMP biosynthesis via de novo pathway; AMP from IMP: step 1/2. Its function is as follows. Plays an important role in the de novo pathway of purine nucleotide biosynthesis. Catalyzes the first committed step in the biosynthesis of AMP from IMP. This Petrotoga mobilis (strain DSM 10674 / SJ95) protein is Adenylosuccinate synthetase.